The chain runs to 485 residues: ATP-dependent 6-phosphofructokinase 7 (485 aa).

ATP-binding positions include G101, 164-165 (RG), and 189-192 (GDGT). D190 contributes to the Mg(2+) binding site. Substrate-binding positions include 218-220 (TID), 263-265 (MGR), E319, and 374-377 (YMIR). D220 acts as the Proton acceptor in catalysis. The tract at residues 449-485 (SFLGPKDTSEEKKELPETPLLDDGAVDIPPVTKEVTK) is disordered. A compositionally biased stretch (basic and acidic residues) spans 455–464 (DTSEEKKELP).

Belongs to the phosphofructokinase type A (PFKA) family. PPi-dependent PFK group II subfamily. Atypical ATP-dependent clade 'X' sub-subfamily. Homotetramer. It depends on Mg(2+) as a cofactor. As to expression, expressed in roots, leaves, stems and flowers.

The protein localises to the cytoplasm. It carries out the reaction beta-D-fructose 6-phosphate + ATP = beta-D-fructose 1,6-bisphosphate + ADP + H(+). It participates in carbohydrate degradation; glycolysis; D-glyceraldehyde 3-phosphate and glycerone phosphate from D-glucose: step 3/4. Its activity is regulated as follows. Allosterically activated by AMP. In terms of biological role, catalyzes the phosphorylation of D-fructose 6-phosphate to fructose 1,6-bisphosphate by ATP, the first committing step of glycolysis. The protein is ATP-dependent 6-phosphofructokinase 7 of Arabidopsis thaliana (Mouse-ear cress).